Here is a 213-residue protein sequence, read N- to C-terminus: Ras-like protein rasU (213 aa).

21–28 is a GTP binding site; that stretch reads GDGGVGKT. The Effector region signature appears at 43 to 51; the sequence is YDPTIEDLY. GTP is bound by residues 68–72 and 126–129; these read DTAGQ and NKSD. Position 210 is a cysteine methyl ester (C210). The S-geranylgeranyl cysteine moiety is linked to residue C210. The propeptide at 211 to 213 is removed in mature form; the sequence is KMI.

The protein belongs to the small GTPase superfamily. Ras family.

The protein resides in the cell membrane. The catalysed reaction is GTP + H2O = GDP + phosphate + H(+). Its function is as follows. Ras proteins bind GDP/GTP and possess intrinsic GTPase activity. The polypeptide is Ras-like protein rasU (rasU) (Dictyostelium discoideum (Social amoeba)).